The chain runs to 489 residues: Sphingolipid C9-methyltransferase (489 aa).

2 helical membrane passes run 29–49 and 59–79; these read GAKNFSNWLLLGLLTGVPLFV and TFIFFFILFAIPILMAYWTVL. S-adenosyl-L-methionine-binding positions include 202–203, 239–247, 265–270, and 295–296; these read YT, LLDLGCGWG, TLGKNQ, and YR.

Belongs to the CFA/CMAS family.

Its subcellular location is the membrane. It catalyses the reaction a (4E,8E)-4-sphinga-4,8-dienine ceramide + S-adenosyl-L-methionine = a 9-methyl-(4E,8E)-sphinga-4,8-dienine ceramide + S-adenosyl-L-homocysteine + H(+). The protein operates within lipid metabolism; sphingolipid metabolism. Catalyzes methylation of the sphingoid base component of glucosylceramides (GluCers) at the C9-position. Sphingolipid C9-methylation requires 4,8-desaturated ceramides as substrates. Glucosylceramides play important roles in growth, differentiation and pathogenicity. The methyl group at the C9-position distinguishes fungal glucosylceramides from those of plants and animals, and may thus play a role in host-pathogen interactions enabling the host to recognize the fungal attack and initiate specific defense responses. The polypeptide is Sphingolipid C9-methyltransferase (Komagataella phaffii (strain GS115 / ATCC 20864) (Yeast)).